Here is a 179-residue protein sequence, read N- to C-terminus: O-acetyl-ADP-ribose deacetylase (179 aa).

A Macro domain is found at 1–175 (MTSRLQVIQG…LYARLLTQQG (175 aa)). Substrate contacts are provided by residues 11 to 12 (DI), N25, 33 to 35 (GVD), and 122 to 126 (STGVY). The active-site Proton acceptor is the D35.

The protein belongs to the MacroD-type family. YmdB subfamily. Homodimer. Interacts with RNase III.

The catalysed reaction is 3''-O-acetyl-ADP-D-ribose + H2O = ADP-D-ribose + acetate + H(+). The enzyme catalyses 2''-O-acetyl-ADP-D-ribose + H2O = ADP-D-ribose + acetate + H(+). Its function is as follows. Deacetylates O-acetyl-ADP ribose to yield ADP-ribose and free acetate. Down-regulates ribonuclease 3 (RNase III) activity. Acts by interacting directly with the region of the ribonuclease that is required for dimerization/activation. The chain is O-acetyl-ADP-ribose deacetylase from Salmonella typhi.